The chain runs to 93 residues: Small ribosomal subunit protein uS19 (93 aa).

Belongs to the universal ribosomal protein uS19 family.

Its function is as follows. Protein S19 forms a complex with S13 that binds strongly to the 16S ribosomal RNA. This chain is Small ribosomal subunit protein uS19, found in Maridesulfovibrio salexigens (strain ATCC 14822 / DSM 2638 / NCIMB 8403 / VKM B-1763) (Desulfovibrio salexigens).